Here is a 591-residue protein sequence, read N- to C-terminus: Aspartate--tRNA ligase (591 aa).

Glutamate 176 is a binding site for L-aspartate. An aspartate region spans residues 200–203; it reads QILK. Arginine 222 provides a ligand contact to L-aspartate. Residues 222–224 and glutamine 231 contribute to the ATP site; that span reads RDE. Histidine 450 lines the L-aspartate pocket. Position 484 (glutamate 484) interacts with ATP. Position 491 (arginine 491) interacts with L-aspartate. 536–539 contributes to the ATP binding site; that stretch reads GLDR.

Belongs to the class-II aminoacyl-tRNA synthetase family. Type 1 subfamily. As to quaternary structure, homodimer.

It localises to the cytoplasm. The enzyme catalyses tRNA(Asp) + L-aspartate + ATP = L-aspartyl-tRNA(Asp) + AMP + diphosphate. Its function is as follows. Catalyzes the attachment of L-aspartate to tRNA(Asp) in a two-step reaction: L-aspartate is first activated by ATP to form Asp-AMP and then transferred to the acceptor end of tRNA(Asp). This Listeria monocytogenes serotype 4b (strain F2365) protein is Aspartate--tRNA ligase.